A 395-amino-acid polypeptide reads, in one-letter code: Nucleoside diphosphate kinase homolog 7 (395 aa).

The region spanning 22-110 is the DM10 domain; it reads QSERFAFIAE…YTARQLGSRK (89 aa).

It belongs to the NDK family. As to quaternary structure, component of sperm flagellar doublet microtubules. Component of the gamma-tubulin ring complex.

It is found in the cytoplasm. The protein localises to the cytoskeleton. It localises to the microtubule organizing center. Its subcellular location is the centrosome. The protein resides in the nucleus. It is found in the spindle. The protein localises to the cilium axoneme. It localises to the flagellum axoneme. Its subcellular location is the cell projection. The protein resides in the cilium. In terms of biological role, possesses an intrinsic kinase activity. Displays 3'-5' exonuclease activity with a preference for single-stranded DNA. Does not seem to have nucleoside diphosphate kinase activity. Functional component of the gamma-tubulin ring complex, implicated in the regulation of the microtubule-nucleating activity of the gamma-tubulin ring complex in centrosomes, in a kinase activity-dependent manner. Part of the dynein-decorated doublet microtubules (DMTs) in cilia axoneme, which is required for motile cilia beating. The sequence is that of Nucleoside diphosphate kinase homolog 7 from Mus musculus (Mouse).